The sequence spans 554 residues: 7-epi-sesquithujene synthase (554 aa).

Residues Asp-308 and Asp-312 each coordinate Mg(2+). Residues Asp-308, Asp-312, Arg-449, and Asn-452 each contribute to the substrate site. Residues 308–312 carry the DDXXD motif motif; it reads DDMFD. 3 residues coordinate Mg(2+): Asn-452, Ser-456, and Glu-460.

The protein belongs to the terpene synthase family. In terms of assembly, monomer. The cofactor is Mg(2+). Requires Mn(2+) as cofactor. Highly expressed in the husk. Detected in leaf sheaths and leaves.

It localises to the cytoplasm. The enzyme catalyses (2E,6E)-farnesyl diphosphate = 7-epi-sesquithujene + diphosphate. It carries out the reaction (2E,6E)-farnesyl diphosphate = (1S,5S,6R)-alpha-bergamotene + diphosphate. The catalysed reaction is (2E,6E)-farnesyl diphosphate = (E)-beta-farnesene + diphosphate. It catalyses the reaction (2E,6E)-farnesyl diphosphate = (S)-beta-bisabolene + diphosphate. The enzyme catalyses (2Z,6E)-farnesyl diphosphate = (-)-beta-curcumene + diphosphate. It carries out the reaction (2E,6E)-farnesyl diphosphate = gamma-curcumene + diphosphate. The catalysed reaction is (2E,6E)-farnesyl diphosphate = sesquisabinene A + diphosphate. Its pathway is secondary metabolite biosynthesis; terpenoid biosynthesis. In terms of biological role, sesquiterpene synthase involved in the production after herbivore attack of a blend of volatiles that attracts natural enemies of herbivores. Converts farnesyl diphosphate to (S)-beta-bisabolene and 7-epi-sesquithujene, along with a mixture of more than 20 other minor sesquiterpene olefins. Can also act in vitro as a monoterpene synthase, converting geranyl diphosphate to (S)-(-)-limonene, beta-myrcene and 11 other monoterpenes. This Zea mays (Maize) protein is 7-epi-sesquithujene synthase.